We begin with the raw amino-acid sequence, 539 residues long: MPSSNGSSDFVRKLFNMLEEPEYRHILRWSDSGDSFIVLDTNEFTKTILPRHFKHSNFASFVRQLNKYDFHKVRHEEGAPSIYGEGAWEFRHDDFQLHHKDLLDNIKRKAPSKRNLANENTAPVIENLKQQVDSILDFQKLLDRNLSGLATSYQTILLKMFELKRGIESRDLLMSSIISYLCDLEGSTQRQANPGAMFVPSHPLQELLNAYQALAKGQVATTSPQQIPNQIQQASAATTASSKMTVDTNLGTAQPSLYNTPSSDYELANQEKPADSMASAASLNTPLSSNDHSLNPHAHGSYPMYEKFQPIQHPNPGSFTTHLDSNASMAKSFSQISNDSLAKASSVATSMSQMGAAVPTTGLWKRQPRILLVEDDELSRRMTIKFLTSFDCQVDVAVDGIGAVNKANAGGFDLILMDFILPNLDGLSVTCLIRQYDHNTPILAITSNISMNDAVTYFNHGVTDLLVKPFTKLTLLQLLKKQLLNLLQADNSINMSDVPSTKEAKDDKAPVTFYLENDAPMYPQQMLQDPIQADLQHPH.

A DNA-binding region spans residues 7 to 111; sequence SSDFVRKLFN…LLDNIKRKAP (105 aa). Thr-221 bears the Phosphothreonine mark. A Phosphoserine modification is found at Ser-223. Residues 251–263 show a composition bias toward polar residues; the sequence is GTAQPSLYNTPSS. Residues 251–281 form a disordered region; it reads GTAQPSLYNTPSSDYELANQEKPADSMASAA. A Response regulatory domain is found at 369–483; sequence RILLVEDDEL…TLLQLLKKQL (115 aa). Asp-418 is subject to 4-aspartylphosphate.

The protein in the N-terminal section; belongs to the HSF family.

The protein localises to the nucleus. In terms of biological role, involved in oxidative stress. Transcription factor that acts upon trr1 and ctt1. The sequence is that of Transcription factor prr1 (prr1) from Schizosaccharomyces pombe (strain 972 / ATCC 24843) (Fission yeast).